The following is a 257-amino-acid chain: Imidazole glycerol phosphate synthase subunit HisF (257 aa).

Residues aspartate 11 and aspartate 130 contribute to the active site.

It belongs to the HisA/HisF family. In terms of assembly, heterodimer of HisH and HisF.

It localises to the cytoplasm. The catalysed reaction is 5-[(5-phospho-1-deoxy-D-ribulos-1-ylimino)methylamino]-1-(5-phospho-beta-D-ribosyl)imidazole-4-carboxamide + L-glutamine = D-erythro-1-(imidazol-4-yl)glycerol 3-phosphate + 5-amino-1-(5-phospho-beta-D-ribosyl)imidazole-4-carboxamide + L-glutamate + H(+). It functions in the pathway amino-acid biosynthesis; L-histidine biosynthesis; L-histidine from 5-phospho-alpha-D-ribose 1-diphosphate: step 5/9. Functionally, IGPS catalyzes the conversion of PRFAR and glutamine to IGP, AICAR and glutamate. The HisF subunit catalyzes the cyclization activity that produces IGP and AICAR from PRFAR using the ammonia provided by the HisH subunit. This is Imidazole glycerol phosphate synthase subunit HisF from Mannheimia succiniciproducens (strain KCTC 0769BP / MBEL55E).